The primary structure comprises 192 residues: Protein GrpE (192 aa).

The segment covering 1–20 has biased composition (basic and acidic residues); it reads MEERNEQVVEEVKEEVKEAQ. Positions 1–39 are disordered; it reads MEERNEQVVEEVKEEVKEAQVEEAVTSEDSEESVEEKSE. Acidic residues predominate over residues 25–34; that stretch reads VTSEDSEESV.

It belongs to the GrpE family. Homodimer.

It is found in the cytoplasm. Its function is as follows. Participates actively in the response to hyperosmotic and heat shock by preventing the aggregation of stress-denatured proteins, in association with DnaK and GrpE. It is the nucleotide exchange factor for DnaK and may function as a thermosensor. Unfolded proteins bind initially to DnaJ; upon interaction with the DnaJ-bound protein, DnaK hydrolyzes its bound ATP, resulting in the formation of a stable complex. GrpE releases ADP from DnaK; ATP binding to DnaK triggers the release of the substrate protein, thus completing the reaction cycle. Several rounds of ATP-dependent interactions between DnaJ, DnaK and GrpE are required for fully efficient folding. In Bacillus cereus (strain ATCC 10987 / NRS 248), this protein is Protein GrpE.